Reading from the N-terminus, the 393-residue chain is Sugar efflux transporter A (393 aa).

Helical transmembrane passes span 22-42 (VIAFLTGIAGALQLPTLSLFL), 51-71 (FMVGLFYTGSAVIGIVVSQIL), 82-102 (KTLILQCCLLGALACLLYAWN), 107-127 (VLLFIGVLLSSFGSTANPQLF), 152-172 (ISLSWVIGPPVAFALALGFGF), 174-194 (AMYLTAAVVFVLCGLLVWLLL), 219-239 (LLLFTACTLMWTCNGIYLINM), 253-273 (LAGVMMGTAAGLEIPVMLLAG), 287-307 (LAVIAGLIFYTGLTLLNGSWA), 308-328 (LLALQLLNAIFIGILAGMGML), 344-364 (LFTNTTRVGWIISGSLAGIVA), and 366-386 (VWSYHAGFVIAIAMLAGAAVC).

The protein belongs to the major facilitator superfamily. Set transporter family.

The protein resides in the cell inner membrane. In terms of biological role, involved in the efflux of sugars. The physiological role may be the reduction of the intracellular concentration of toxic sugars or sugar metabolites. Transports IPTG, lactose and arabinose. In Dickeya chrysanthemi (Pectobacterium chrysanthemi), this protein is Sugar efflux transporter A (sotA).